The primary structure comprises 324 residues: Methionyl-tRNA formyltransferase (324 aa).

114–117 (SLLP) is a (6S)-5,6,7,8-tetrahydrofolate binding site.

This sequence belongs to the Fmt family.

The enzyme catalyses L-methionyl-tRNA(fMet) + (6R)-10-formyltetrahydrofolate = N-formyl-L-methionyl-tRNA(fMet) + (6S)-5,6,7,8-tetrahydrofolate + H(+). Functionally, attaches a formyl group to the free amino group of methionyl-tRNA(fMet). The formyl group appears to play a dual role in the initiator identity of N-formylmethionyl-tRNA by promoting its recognition by IF2 and preventing the misappropriation of this tRNA by the elongation apparatus. The chain is Methionyl-tRNA formyltransferase from Phocaeicola vulgatus (strain ATCC 8482 / DSM 1447 / JCM 5826 / CCUG 4940 / NBRC 14291 / NCTC 11154) (Bacteroides vulgatus).